We begin with the raw amino-acid sequence, 279 residues long: Ankyrin repeat domain-containing protein 7 (279 aa).

Residues 1–11 (MKKFFPFRGKR) are compositionally biased toward basic residues. The tract at residues 1–25 (MKKFFPFRGKRKTDDSHSHSSEVPI) is disordered. ANK repeat units lie at residues 80–109 (RSRTPLHLACANGYTNIVSLLIENQCKINV), 113–142 (ENRTPLIKAVECQQESCATVLLLHGADPNL), 146–175 (YSNTALHYAVCGQNISLANKLLQYKANLEA), 179–208 (DGHTPLLLAVAENNENMVKFLLKKGADVNA), and 212–241 (NHRTAIMIALIVEPTSSVKLLLQQDTDLAH).

This chain is Ankyrin repeat domain-containing protein 7 (Ankrd7), found in Mus musculus (Mouse).